A 271-amino-acid polypeptide reads, in one-letter code: UPF0328 protein ECU09_0020 (271 aa).

This sequence belongs to the UPF0328 family.

The polypeptide is UPF0328 protein ECU09_0020 (Encephalitozoon cuniculi (strain GB-M1) (Microsporidian parasite)).